Here is a 500-residue protein sequence, read N- to C-terminus: Na(+)/H(+) antiporter NhaB (500 aa).

12 helical membrane passes run 34–54, 58–78, 96–116, 129–149, 150–170, 205–225, 241–261, 311–331, 350–370, 394–414, 450–470, and 477–497; these read LLLA…QFIF, MALK…ALLL, VILL…LLLF, AVLS…LDAL, TVTA…HRVA, LLMH…VGEP, FFLK…VTCV, ILIV…LMVI, FQDA…VAVI, MLYL…VATI, ATPN…APLI, and MVWM…WAVT.

The protein belongs to the NhaB Na(+)/H(+) (TC 2.A.34) antiporter family.

The protein localises to the cell inner membrane. The enzyme catalyses 2 Na(+)(in) + 3 H(+)(out) = 2 Na(+)(out) + 3 H(+)(in). Functionally, na(+)/H(+) antiporter that extrudes sodium in exchange for external protons. The polypeptide is Na(+)/H(+) antiporter NhaB (Pseudomonas entomophila (strain L48)).